The following is a 1168-amino-acid chain: Myosin IC heavy chain (1168 aa).

One can recognise a Myosin motor domain in the interval 7–666; that stretch reads HGVDDMVMLT…SVFSLEELRD (660 aa). 101 to 108 is a binding site for ATP; the sequence is GESGAGKT. At S311 the chain carries Phosphoserine. The segment at 542–564 is actin-binding; it reads INILVATLSKCTPHYIRCIKPNE. Residues 704–892 form the TH1 domain; that stretch reads KERRRLSLER…KVSVAPGLPP (189 aa). Disordered regions lie at residues 876-909, 921-978, and 1036-1168; these read DGKV…GGAS, ILGA…APGP, and AAAP…PPGM. A compositionally biased stretch (polar residues) spans 895–909; the sequence is APNIQAPQETSGGAS. 2 stretches are compositionally biased toward gly residues: residues 924–939 and 950–959; these read AKGG…GGPS and PGGGGGGPSP. Over residues 960–978 the composition is skewed to low complexity; sequence FGGRPSPSGPPAAASAPGP. In terms of domain architecture, SH3 spans 976 to 1035; that stretch reads PGPEQARALYDFAAENPDELTFNEGAVVTVINKSNPDWWEGELNGQRGVFPASYVELIPR. Pro residues predominate over residues 1040 to 1052; it reads APGPSGGPRPAPP. Gly residues-rich tracts occupy residues 1063-1083 and 1090-1099; these read GGPG…GRGG and GRAGPPGGRG. Over residues 1100 to 1112 the composition is skewed to low complexity; that stretch reads MPAPGGAAPRGRG. A compositionally biased stretch (gly residues) spans 1120–1141; the sequence is GPPGGGRGGAPPPGGMRGRGGP. Residues 1152-1161 are compositionally biased toward low complexity; it reads GGMMPPRGRA.

The protein belongs to the TRAFAC class myosin-kinesin ATPase superfamily. Myosin family. As to quaternary structure, myosin I heavy chain is single-headed. Dimer of a heavy and a light chain. Inability to self-assemble into filaments.

Its function is as follows. Myosin is a protein that binds to F-actin and has ATPase activity that is activated by F-actin. The sequence is that of Myosin IC heavy chain (MIC) from Acanthamoeba castellanii (Amoeba).